The chain runs to 157 residues: Crossover junction endodeoxyribonuclease RuvC (157 aa).

Active-site residues include Asp-7, Glu-67, and Asp-139. 3 residues coordinate Mg(2+): Asp-7, Glu-67, and Asp-139.

Belongs to the RuvC family. In terms of assembly, homodimer which binds Holliday junction (HJ) DNA. The HJ becomes 2-fold symmetrical on binding to RuvC with unstacked arms; it has a different conformation from HJ DNA in complex with RuvA. In the full resolvosome a probable DNA-RuvA(4)-RuvB(12)-RuvC(2) complex forms which resolves the HJ. It depends on Mg(2+) as a cofactor.

Its subcellular location is the cytoplasm. It catalyses the reaction Endonucleolytic cleavage at a junction such as a reciprocal single-stranded crossover between two homologous DNA duplexes (Holliday junction).. The RuvA-RuvB-RuvC complex processes Holliday junction (HJ) DNA during genetic recombination and DNA repair. Endonuclease that resolves HJ intermediates. Cleaves cruciform DNA by making single-stranded nicks across the HJ at symmetrical positions within the homologous arms, yielding a 5'-phosphate and a 3'-hydroxyl group; requires a central core of homology in the junction. The consensus cleavage sequence is 5'-(A/T)TT(C/G)-3'. Cleavage occurs on the 3'-side of the TT dinucleotide at the point of strand exchange. HJ branch migration catalyzed by RuvA-RuvB allows RuvC to scan DNA until it finds its consensus sequence, where it cleaves and resolves the cruciform DNA. In Prochlorococcus marinus (strain MIT 9301), this protein is Crossover junction endodeoxyribonuclease RuvC.